A 366-amino-acid chain; its full sequence is Chorismate synthase (366 aa).

The NADP(+) site is built by Arg-48 and Arg-54. Residues Arg-125–Ser-127, Asn-238–Ala-239, Gly-278, Lys-293–Ser-297, and Arg-319 contribute to the FMN site.

It belongs to the chorismate synthase family. As to quaternary structure, homotetramer. It depends on FMNH2 as a cofactor.

It carries out the reaction 5-O-(1-carboxyvinyl)-3-phosphoshikimate = chorismate + phosphate. It functions in the pathway metabolic intermediate biosynthesis; chorismate biosynthesis; chorismate from D-erythrose 4-phosphate and phosphoenolpyruvate: step 7/7. In terms of biological role, catalyzes the anti-1,4-elimination of the C-3 phosphate and the C-6 proR hydrogen from 5-enolpyruvylshikimate-3-phosphate (EPSP) to yield chorismate, which is the branch point compound that serves as the starting substrate for the three terminal pathways of aromatic amino acid biosynthesis. This reaction introduces a second double bond into the aromatic ring system. This Herminiimonas arsenicoxydans protein is Chorismate synthase.